Reading from the N-terminus, the 582-residue chain is Phosphoribosylaminoimidazole carboxylase (582 aa).

The 192-residue stretch at 114 to 305 (KKYLAERGVA…QFENHLRAIL (192 aa)) folds into the ATP-grasp domain. 143-200 (AGRLGLPLMLKAKTLAYDGRGNSPLKSASSGDIQASLKFLGDRPLYAEGWAPFVKEVA) contributes to the ATP binding site.

The protein in the C-terminal section; belongs to the AIR carboxylase family. Class I subfamily.

The catalysed reaction is 5-amino-1-(5-phospho-D-ribosyl)imidazole-4-carboxylate + H(+) = 5-amino-1-(5-phospho-beta-D-ribosyl)imidazole + CO2. The protein operates within purine metabolism; IMP biosynthesis via de novo pathway; 5-amino-1-(5-phospho-D-ribosyl)imidazole-4-carboxylate from 5-amino-1-(5-phospho-D-ribosyl)imidazole (carboxylase route): step 1/1. This is Phosphoribosylaminoimidazole carboxylase (ADE2) from Cryptococcus neoformans var. neoformans serotype D (strain JEC21 / ATCC MYA-565) (Filobasidiella neoformans).